Consider the following 244-residue polypeptide: Probable hydrolase R7 (244 aa).

Positions 1–20 (MTKPFILLVPGSFAPETIYA) are cleaved as a signal peptide. Active-site charge relay system residues include D192 and H224. N-linked (GlcNAc...) asparagine glycosylation occurs at N227.

It belongs to the AB hydrolase superfamily.

It functions in the pathway secondary metabolite biosynthesis. In terms of biological role, probable hydrolase; part of the gene cluster that mediates the biosynthesis of squalestatin S1 (SQS1, also known as zaragozic acid A), a lead compound for the treatment of hyper-cholesterolemia by targeting squalene synthase (SS). Both phenylalanine and benzoic acid are known precursors of SQS1 and so it is unsurprising that the cluster also contains genes potentially involved in benzoate production such as phenyl-alanine ammonia lysase (PAL) M7, which catalyzes the first step in the degradation of phenylalanine, or the NADP-dependent dehydrogenase M3. The cluster contains two PKS encoding genes. The tetraketide synthase is responsible for the biosynthesis of the tetraketide sidechain of SQS1. The biosynthesis must involve 3 rounds of chain extension. After the first and second rounds methyl-transfer occurs, and in all rounds of extension the ketoreductase and dehydratase areactive. The enoyl reductase and C-MeT are not active in the final round of extension. The other PKS is therefore likely to encode squalestatin hexaketide synthase (SQHKS). The hexaketide main chain is initiated by benzoate which is an unusual starter unit for a highly reducing polyketide synthase. The cluster also contains a gene encoding a citrate synthase-like protein R3 presumably involved in linking the hexaketide to the oxaloacetate moiety. Formation of the tetraketide CoA may be catalyzed by the M9 CoA ligase, but the mechanism of release of the tetraketide and the hexaketide from their respective PKS remains unknown, although the cluster encodes a potential esterase (M8) and a possible hydrolase (M10) which could be involved in these processes. Two acyltransferases (AT), M4 and R4, are also encoded in the cluster. M4 is responsible for loading of the tetraketide sidechain from CoA onto the squalestatin core as the final step of biosynthesis. M4 appears to have a broad substrate selectivity for its acyl CoA substrate, allowing the in vitro synthesis of novel squalestatins. The biosynthesis of SQS1 requires several oxidative steps likely performed by oxidoreductases M1, R1 and R2. Finally, in support of the identification of the cluster as being responsible for SQS1 production, the cluster contains a gene encoding a putative squalene synthase (SS) R6, suggesting a likely mechanism for self-resistance. This is Probable hydrolase R7 from Phoma sp. (strain ATCC 20986 / MF5453).